The sequence spans 437 residues: tRNA wybutosine-synthesizing protein 2 homolog (437 aa).

S-adenosyl-L-methionine is bound by residues Ser-208, Lys-215, Glu-255, and 283–284 (DN). Positions 331-344 (SFSGKNPQPPGSSN) are enriched in polar residues. Positions 331 to 374 (SFSGKNPQPPGSSNMEKKHWPHPQKITTDKQGNRTTGSCMGEMS) are disordered.

This sequence belongs to the class I-like SAM-binding methyltransferase superfamily. TRM5/TYW2 family.

The enzyme catalyses 4-demethylwyosine(37) in tRNA(Phe) + S-adenosyl-L-methionine = 4-demethyl-7-[(3S)-3-amino-3-carboxypropyl]wyosine(37) in tRNA(Phe) + S-methyl-5'-thioadenosine + H(+). The protein operates within tRNA modification; wybutosine-tRNA(Phe) biosynthesis. In terms of biological role, S-adenosyl-L-methionine-dependent transferase that acts as a component of the wybutosine biosynthesis pathway. Wybutosine is a hyper modified guanosine with a tricyclic base found at the 3'-position adjacent to the anticodon of eukaryotic phenylalanine tRNA. Catalyzes the transfer of the alpha-amino-alpha-carboxypropyl (acp) group from S-adenosyl-L-methionine to the C-7 position of 4-demethylwyosine (imG-14) to produce wybutosine-86. The protein is tRNA wybutosine-synthesizing protein 2 homolog (Trmt12) of Rattus norvegicus (Rat).